The sequence spans 213 residues: Large ribosomal subunit protein uL1 (213 aa).

This sequence belongs to the universal ribosomal protein uL1 family. As to quaternary structure, part of the 50S ribosomal subunit.

In terms of biological role, binds directly to 23S rRNA. Probably involved in E site tRNA release. Its function is as follows. Protein L1 is also a translational repressor protein, it controls the translation of its operon by binding to its mRNA. The polypeptide is Large ribosomal subunit protein uL1 (Methanoculleus marisnigri (strain ATCC 35101 / DSM 1498 / JR1)).